The chain runs to 88 residues: CRISPR-associated endoribonuclease Cas2 2 (88 aa).

Mg(2+) is bound at residue Asp8.

This sequence belongs to the CRISPR-associated endoribonuclease Cas2 protein family. As to quaternary structure, homodimer, forms a heterotetramer with a Cas1 homodimer. Mg(2+) serves as cofactor.

CRISPR (clustered regularly interspaced short palindromic repeat), is an adaptive immune system that provides protection against mobile genetic elements (viruses, transposable elements and conjugative plasmids). CRISPR clusters contain sequences complementary to antecedent mobile elements and target invading nucleic acids. CRISPR clusters are transcribed and processed into CRISPR RNA (crRNA). Functions as a ssRNA-specific endoribonuclease. Involved in the integration of spacer DNA into the CRISPR cassette. The chain is CRISPR-associated endoribonuclease Cas2 2 (cas22) from Saccharolobus solfataricus (strain ATCC 35092 / DSM 1617 / JCM 11322 / P2) (Sulfolobus solfataricus).